A 549-amino-acid polypeptide reads, in one-letter code: Glucose-6-phosphate isomerase (549 aa).

E355 (proton donor) is an active-site residue. Residues H386 and K514 contribute to the active site.

It belongs to the GPI family.

The protein localises to the cytoplasm. It carries out the reaction alpha-D-glucose 6-phosphate = beta-D-fructose 6-phosphate. Its pathway is carbohydrate biosynthesis; gluconeogenesis. It functions in the pathway carbohydrate degradation; glycolysis; D-glyceraldehyde 3-phosphate and glycerone phosphate from D-glucose: step 2/4. Functionally, catalyzes the reversible isomerization of glucose-6-phosphate to fructose-6-phosphate. In Aeromonas salmonicida (strain A449), this protein is Glucose-6-phosphate isomerase.